A 476-amino-acid chain; its full sequence is Elongation factor Tu, chloroplastic (476 aa).

A chloroplast-targeting transit peptide spans 1 to 67 (MAISAPAACS…QSTRRSFTVR (67 aa)). The 205-residue stretch at 77 to 281 (KPHVNIGTIG…AVDDYIPIPQ (205 aa)) folds into the tr-type G domain. The segment at 86–93 (GHVDHGKT) is G1. 86–93 (GHVDHGKT) lines the GTP pocket. Thr-94 is modified (phosphothreonine). Positions 127-131 (GITIN) are G2. A G3 region spans residues 148–151 (DCPG). Residues 148–152 (DCPGH) and 203–206 (NKED) each bind GTP. The G4 stretch occupies residues 203 to 206 (NKED). The interval 241-243 (SAL) is G5.

This sequence belongs to the TRAFAC class translation factor GTPase superfamily. Classic translation factor GTPase family. EF-Tu/EF-1A subfamily. Interacts with PI5K2. Interacts with APD2.

The protein resides in the plastid. The protein localises to the chloroplast. This protein promotes the GTP-dependent binding of aminoacyl-tRNA to the A-site of ribosomes during protein biosynthesis. This chain is Elongation factor Tu, chloroplastic (TUFA), found in Arabidopsis thaliana (Mouse-ear cress).